Consider the following 105-residue polypeptide: Vitelline membrane protein Vm32E (105 aa).

The signal sequence occupies residues Met-1–Ala-17. Positions Gly-25–Ala-62 constitute a VM domain.

It belongs to the vitelline membrane family.

The protein resides in the secreted. Its function is as follows. Major early eggshell protein. The sequence is that of Vitelline membrane protein Vm32E from Drosophila ananassae (Fruit fly).